We begin with the raw amino-acid sequence, 152 residues long: UPF0735 ACT domain-containing protein SAS1579 (152 aa).

Residues 75-150 enclose the ACT domain; the sequence is TLILYVTDIV…YVSKVELISM (76 aa).

It belongs to the UPF0735 family.

The sequence is that of UPF0735 ACT domain-containing protein SAS1579 from Staphylococcus aureus (strain MSSA476).